A 238-amino-acid polypeptide reads, in one-letter code: Uridylate kinase (238 aa).

12 to 15 (KLSG) serves as a coordination point for ATP. The segment at 20–25 (GEKGFG) is involved in allosteric activation by GTP. Glycine 54 is a UMP binding site. Residues glycine 55 and arginine 59 each contribute to the ATP site. UMP-binding positions include aspartate 72 and 133–140 (TGNPYFST). The ATP site is built by tyrosine 166 and aspartate 169.

It belongs to the UMP kinase family. In terms of assembly, homohexamer.

The protein localises to the cytoplasm. The catalysed reaction is UMP + ATP = UDP + ADP. The protein operates within pyrimidine metabolism; CTP biosynthesis via de novo pathway; UDP from UMP (UMPK route): step 1/1. Its activity is regulated as follows. Allosterically activated by GTP. Inhibited by UTP. Its function is as follows. Catalyzes the reversible phosphorylation of UMP to UDP. The chain is Uridylate kinase from Clostridium botulinum (strain Hall / ATCC 3502 / NCTC 13319 / Type A).